Here is a 548-residue protein sequence, read N- to C-terminus: Sulochrin halogenase gedL (548 aa).

FAD-binding residues include G14, A17, and E47. Chloride-binding residues include S333 and G334. V335 is a binding site for FAD.

The protein belongs to the flavin-dependent halogenase family.

It catalyses the reaction sulochrin + 2 FADH2 + 2 chloride + 2 O2 = dihydrogeodin + 2 FAD + 4 H2O + H(+). The protein operates within secondary metabolite biosynthesis. Sulochrin halogenase; part of the gene cluster that mediates the biosynthesis of geodin, an intermediate in the biosynthesis of other natural products. The pathway begins with the synthesis of atrochrysone thioester by the polyketide synthase (PKS) gedC. The atrochrysone carboxyl ACP thioesterase gedB then breaks the thioester bond and releases the atrochrysone carboxylic acid from gedC. The atrochrysone carboxylic acid is then converted to atrochrysone which is further transformed into emodinanthrone. The next step is performed by the emodinanthrone oxygenase gedH that catalyzes the oxidation of emodinanthrone to emodin. Emodin O-methyltransferase encoded probably by gedA then catalyzes methylation of the 8-hydroxy group of emodin to form questin. Ring cleavage of questin by questin oxidase gedK leads to desmethylsulochrin via several intermediates including questin epoxide. Another methylation step probably catalyzed by methyltransferase gedG leads to the formation of sulochrin which is further converted to dihydrogeodin by the sulochrin halogenase gedL. Finally, the dihydrogeodin oxidase gedJ catalyzes the stereospecific phenol oxidative coupling reaction converting dihydrogeodin to geodin. The chain is Sulochrin halogenase gedL from Aspergillus terreus (strain NIH 2624 / FGSC A1156).